Here is a 441-residue protein sequence, read N- to C-terminus: Glutamate-1-semialdehyde 2,1-aminomutase (441 aa).

Lysine 279 is subject to N6-(pyridoxal phosphate)lysine.

It belongs to the class-III pyridoxal-phosphate-dependent aminotransferase family. HemL subfamily. As to quaternary structure, homodimer. The cofactor is pyridoxal 5'-phosphate.

The protein resides in the cytoplasm. The enzyme catalyses (S)-4-amino-5-oxopentanoate = 5-aminolevulinate. Its pathway is porphyrin-containing compound metabolism; protoporphyrin-IX biosynthesis; 5-aminolevulinate from L-glutamyl-tRNA(Glu): step 2/2. The chain is Glutamate-1-semialdehyde 2,1-aminomutase from Leptospira borgpetersenii serovar Hardjo-bovis (strain JB197).